A 193-amino-acid polypeptide reads, in one-letter code: dCTP deaminase (193 aa).

DCTP contacts are provided by residues 110–115, Asp-128, 136–138, Tyr-171, Lys-178, and Gln-182; these read RSSLAR and VLE. Glu-138 serves as the catalytic Proton donor/acceptor. Residues 169-193 form a disordered region; sequence RPYNSRQDAKYRDQQGAVASRIDKD.

It belongs to the dCTP deaminase family. In terms of assembly, homotrimer.

The catalysed reaction is dCTP + H2O + H(+) = dUTP + NH4(+). Its pathway is pyrimidine metabolism; dUMP biosynthesis; dUMP from dCTP (dUTP route): step 1/2. Catalyzes the deamination of dCTP to dUTP. This chain is dCTP deaminase, found in Serratia proteamaculans (strain 568).